A 318-amino-acid chain; its full sequence is tRNA-modifying protein YgfZ (318 aa).

2 residues coordinate folate: Trp-24 and Trp-185.

Belongs to the tRNA-modifying YgfZ family.

It is found in the cytoplasm. Its function is as follows. Folate-binding protein involved in regulating the level of ATP-DnaA and in the modification of some tRNAs. It is probably a key factor in regulatory networks that act via tRNA modification, such as initiation of chromosomal replication. The polypeptide is tRNA-modifying protein YgfZ (Buchnera aphidicola subsp. Baizongia pistaciae (strain Bp)).